Consider the following 92-residue polypeptide: Small ribosomal subunit protein uS19 (92 aa).

This sequence belongs to the universal ribosomal protein uS19 family.

Functionally, protein S19 forms a complex with S13 that binds strongly to the 16S ribosomal RNA. This chain is Small ribosomal subunit protein uS19, found in Leuconostoc mesenteroides subsp. mesenteroides (strain ATCC 8293 / DSM 20343 / BCRC 11652 / CCM 1803 / JCM 6124 / NCDO 523 / NBRC 100496 / NCIMB 8023 / NCTC 12954 / NRRL B-1118 / 37Y).